A 476-amino-acid chain; its full sequence is NAD(+) hydrolase ThsA (476 aa).

Positions 4–283 constitute a Deacetylase sirtuin-type domain; the sequence is NPIVELFIKD…QRIENNIKTK (280 aa). The NAD(+) site is built by Ala23, Asp114, and His152. His152 (proton acceptor) is an active-site residue. Residues 284–476 form an SLOG (STALD) domain, binds 3'cADPR region; the sequence is TVFLSGSAVE…IIEFVEILSN (193 aa). 3'cADPR-binding residues include Gly289, Ser290, Leu326, Phe357, Arg371, Lys388, Gly399, and Glu403.

This sequence belongs to the soluble Thoeris ThsA family. Homotetramer formed by dimer of dimers; homooctamers are occasionally seen. Not seen to interact with ThsB. In the absence of the signal generated by ThsB, 63% monomer and 20% homotetramer; in the presence of the ThsB signal product 40% of the protein is dimeric. Homotetramer in solution; probably dimerizes via the N-terminal sirtuin-like domain.

It is found in the cytoplasm. It catalyses the reaction NAD(+) + H2O = ADP-D-ribose + nicotinamide + H(+). With respect to regulation, activated by a molecule generated by endogenous ThsB (AC J8G8J6) or ThsB' (AC J8CSK2); activation in vitro is 50-100x more sensitive to 3' cyclic ADP-D-ribose (3'cADPR) than 2'cADPR. 3'cADPR activates the NADase function of ThsA by binding to the SLOG domain, which changes its tetramer organization, allowing NAD to access the active site. Also activated by a signal molecule generated by B.dafuensis TIR1 (AC A0A5B8Z670) and TIR2 (AC A0A5B8Z260), and by BdTIR (AC I1GTC2), a plant protein involved in defense against bacterial infection. The signal produced by BdTIR is probably 2'cADPR, which activates this protein, the signal produced by endogenous ThsB' is probably 3'cADPR. Its function is as follows. NAD(+) hydrolyzing component (NADase) of the Thoeris antiviral defense system, composed of ThsA and ThsB. Activated by a signal molecule generated by endogenous ThsB (AC J8G8J6) or ThsB' (AC J8CSK2, probably 3'cADPR), by TIR1 and TIR2 from B.dafuensis or by BdTIR from B.distachyon (AC I1GTC2, probably 2'cADPR). Upon activation binds and hydrolyzes NAD(+), leading to cell death and inhibition of phage replication. Not seen to bind DNA. Activation is 50-100x more sensitive to 3' cyclic ADP-D-ribose (3'cADPR) than 2'cADPR. In another paper ThsA is not activated by any tested cADPR isomer, although it binds 3'cADPR; it was suggested the protein is already in a fully active state. Expression of ThsA and ThsB in B.subtilis (strain BEST7003) confers resistance to phages phi29, SBSphiC, SBSphiJ and SPO1. At multiplicity of infection (MOI) of 0.05 Thoeris-encoding cultures grow normally when infected with SPO1, at MOI 5 cultures collapse prematurely by 90 minutes post-infection, thus the phage are not able to complete a replication cycle. NAD(+) levels fall and ADP-D-ribose levels rise 60 minutes post-infection. Thoeris cultures eventually recover, but retain the same susceptibility to SPO1. The sequence is that of NAD(+) hydrolase ThsA from Bacillus cereus (strain MSX-D12).